The sequence spans 155 residues: V-type proton ATPase 16 kDa proteolipid subunit c (155 aa).

Over 1–10 the chain is Lumenal; that stretch reads MSESKSGPEY. The helical transmembrane segment at 11-33 threads the bilayer; sequence ASFFAVMGASAAMVFSALGAAYG. Topologically, residues 34 to 55 are cytoplasmic; the sequence is TAKSGTGIAAMSVMRPEQIMKS. A helical membrane pass occupies residues 56–76; that stretch reads IIPVVMAGIIAIYGLVVAVLI. The Lumenal segment spans residues 77-92; sequence ANSLNDDISLYKSFLQ. A helical transmembrane segment spans residues 93–114; the sequence is LGAGLSVGLSGLAAGFAIGIVG. Residues 115 to 131 lie on the Cytoplasmic side of the membrane; it reads DAGVRGTAQQPRLFVGM. A helical membrane pass occupies residues 132 to 152; it reads ILILIFAEVLGLYGLIVALIL. Topologically, residues 153–155 are lumenal; sequence STK.

Belongs to the V-ATPase proteolipid subunit family. V-ATPase is a heteromultimeric enzyme made up of two complexes: the ATP-hydrolytic V1 complex and the proton translocation V0 complex. The V1 complex consists of three catalytic AB heterodimers that form a heterohexamer, three peripheral stalks each consisting of EG heterodimers, one central rotor including subunits D and F, and the regulatory subunits C and H. The proton translocation complex V0 consists of the proton transport subunit a, a ring of proteolipid subunits c9c'', rotary subunit d, subunits e and f, and the accessory subunits ATP6AP1/Ac45 and ATP6AP2/PRR. Interacts with the V0 complex V-ATPase subunit a4 ATP6V0A4. Interacts with LASS2. Interacts with RNF182; this interaction leads to ubiquitination and degradation via the proteasome pathway. As to quaternary structure, (Microbial infection) Interacts with HTLV-1 accessory protein p12I. Ubiquitinated by RNF182, leading to its degradation via the ubiquitin-proteasome pathway.

Its subcellular location is the cytoplasmic vesicle. The protein resides in the clathrin-coated vesicle membrane. It localises to the secretory vesicle. The protein localises to the synaptic vesicle membrane. Proton-conducting pore forming subunit of the V0 complex of vacuolar(H+)-ATPase (V-ATPase), a multisubunit enzyme composed of a peripheral complex (V1) that hydrolyzes ATP and a membrane integral complex (V0) that translocates protons. V-ATPase is responsible for acidifying and maintaining the pH of intracellular compartments, and in some cell types, it is targeted to the plasma membrane, where it is responsible for acidifying the extracellular environment. The polypeptide is V-type proton ATPase 16 kDa proteolipid subunit c (ATP6V0C) (Homo sapiens (Human)).